Reading from the N-terminus, the 259-residue chain is Indole-3-glycerol phosphate synthase (259 aa).

Belongs to the TrpC family.

It carries out the reaction 1-(2-carboxyphenylamino)-1-deoxy-D-ribulose 5-phosphate + H(+) = (1S,2R)-1-C-(indol-3-yl)glycerol 3-phosphate + CO2 + H2O. It functions in the pathway amino-acid biosynthesis; L-tryptophan biosynthesis; L-tryptophan from chorismate: step 4/5. The polypeptide is Indole-3-glycerol phosphate synthase (Dehalococcoides mccartyi (strain ATCC BAA-2266 / KCTC 15142 / 195) (Dehalococcoides ethenogenes (strain 195))).